The sequence spans 161 residues: Calcium-binding protein CML24 (161 aa).

EF-hand domains follow at residues 13–48 (GSMDDIKKVFQRFDKNGDGKISVDELKEVIRALSPT), 49–84 (ASPEETVTMMKQFDLDGNGFIDLDEFVALFQIGIGG), 90–125 (NDVSDLKEAFELYDLDGNGRISAKELHSVMKNLGEK), and 126–161 (CSVQDCKKMISKVDIDGDGCVNFDEFKKMMSNGGGA). The Ca(2+) site is built by aspartate 26, asparagine 28, aspartate 30, lysine 32, glutamate 37, aspartate 62, aspartate 64, asparagine 66, glutamate 73, aspartate 103, aspartate 105, asparagine 107, arginine 109, glutamate 114, aspartate 139, aspartate 141, aspartate 143, cysteine 145, and glutamate 150.

In terms of tissue distribution, expressed in seed coat, seedling radical, cotyledons, hypocotyl, shoot apex and elongating root. Expressed in the vasculature of cotyledons, leaves and roots. Highly expressed in guard cells, trichomes and hydathodes. Expressed in inflorescence stem branch points, silique abscission zone, young and mature styles and stigmatic papillae, mature anthers and developing seed.

Calcium-binding protein that may positively regulate abscisic acid (ABA) inhibition of germination and seedling development. May be required for photoperiod-induced flowering and function in ion homeostasis. In Arabidopsis thaliana (Mouse-ear cress), this protein is Calcium-binding protein CML24 (CML24).